A 200-amino-acid polypeptide reads, in one-letter code: Small ribosomal subunit protein uS4 (200 aa).

The interval 20–41 (SGTGKELEKRPYAPGQHGPNQR) is disordered. Residues 92 to 155 (ARLDAVVYSL…LKLDIIAESV (64 aa)) form the S4 RNA-binding domain.

This sequence belongs to the universal ribosomal protein uS4 family. In terms of assembly, part of the 30S ribosomal subunit. Contacts protein S5. The interaction surface between S4 and S5 is involved in control of translational fidelity.

Functionally, one of the primary rRNA binding proteins, it binds directly to 16S rRNA where it nucleates assembly of the body of the 30S subunit. Its function is as follows. With S5 and S12 plays an important role in translational accuracy. This Staphylococcus saprophyticus subsp. saprophyticus (strain ATCC 15305 / DSM 20229 / NCIMB 8711 / NCTC 7292 / S-41) protein is Small ribosomal subunit protein uS4.